A 256-amino-acid polypeptide reads, in one-letter code: MATQRKHLVKDFNPYITCYICKGYLIKPTTVTECLHTFCKTCIVQHFEDSNDCPRCGNQVHETNPLEMLRLDNTLEEIIFKLVPGLREQELERESEFWKKNKPQENGQDDTSKADKPKVDEEGDENEDDKDYHRSDPQIAICLDCLRNNGQSGDNVVKGLMKKFIRCSTRVTVGTIKKFLSLKLKLPSSYELDVLCNGEIMGKDHTMEFIYMTRWRLRGENFRCLNCSASQVCSQDGPLYQSYPMVLQYRPRIDFG.

An RING-type zinc finger spans residues Cys-18–Gly-57. Composition is skewed to basic and acidic residues over residues Glu-94–Pro-103 and Asp-110–Asp-120. The interval Glu-94 to His-133 is disordered.

As to quaternary structure, component of a PRC1-like complex that contains PCGF5, RNF2 and UBE2D3. Interacts with RNF2; the interaction is direct. Interacts with CBX6, CBX7 and CBX8. Interacts with AUTS2; the interaction is direct. Identified in a complex that contains AUTS2, PCGF5, CSNK2B and RNF2.

It is found in the nucleus. The protein localises to the nucleoplasm. In terms of biological role, component of a Polycomb group (PcG) multiprotein PRC1-like complex, a complex class required to maintain the transcriptionally repressive state of many genes, including Hox genes, throughout development. PcG PRC1 complex acts via chromatin remodeling and modification of histones; it mediates monoubiquitination of histone H2A 'Lys-119', rendering chromatin heritably changed in its expressibility. Within the PRC1-like complex, regulates RNF2 ubiquitin ligase activity. Plays a redundant role with PCGF3 as part of a PRC1-like complex that mediates monoubiquitination of histone H2A 'Lys-119' on the X chromosome and is required for normal silencing of one copy of the X chromosome in XX females. This Homo sapiens (Human) protein is Polycomb group RING finger protein 5 (PCGF5).